We begin with the raw amino-acid sequence, 206 residues long: Large ribosomal subunit protein uL4 (206 aa).

The tract at residues 44–87 (KRQGTQKAKTRSEVRGGGRKPWRQKGTGHARQGSTRSPQWTGGG) is disordered. The segment covering 60-71 (GGRKPWRQKGTG) has biased composition (basic residues).

Belongs to the universal ribosomal protein uL4 family. As to quaternary structure, part of the 50S ribosomal subunit.

One of the primary rRNA binding proteins, this protein initially binds near the 5'-end of the 23S rRNA. It is important during the early stages of 50S assembly. It makes multiple contacts with different domains of the 23S rRNA in the assembled 50S subunit and ribosome. Functionally, forms part of the polypeptide exit tunnel. The sequence is that of Large ribosomal subunit protein uL4 from Agathobacter rectalis (strain ATCC 33656 / DSM 3377 / JCM 17463 / KCTC 5835 / VPI 0990) (Eubacterium rectale).